A 180-amino-acid chain; its full sequence is Endoribonuclease YbeY (180 aa).

Zn(2+) contacts are provided by His-149, His-153, and His-159.

The protein belongs to the endoribonuclease YbeY family. The cofactor is Zn(2+).

The protein resides in the cytoplasm. Its function is as follows. Single strand-specific metallo-endoribonuclease involved in late-stage 70S ribosome quality control and in maturation of the 3' terminus of the 16S rRNA. The protein is Endoribonuclease YbeY of Prochlorococcus marinus subsp. pastoris (strain CCMP1986 / NIES-2087 / MED4).